Consider the following 274-residue polypeptide: Putative phosphoenolpyruvate synthase regulatory protein (274 aa).

ADP is bound at residue 157-164 (GVSRCGKT).

Belongs to the pyruvate, phosphate/water dikinase regulatory protein family. PSRP subfamily.

The enzyme catalyses [pyruvate, water dikinase] + ADP = [pyruvate, water dikinase]-phosphate + AMP + H(+). It carries out the reaction [pyruvate, water dikinase]-phosphate + phosphate + H(+) = [pyruvate, water dikinase] + diphosphate. Its function is as follows. Bifunctional serine/threonine kinase and phosphorylase involved in the regulation of the phosphoenolpyruvate synthase (PEPS) by catalyzing its phosphorylation/dephosphorylation. The chain is Putative phosphoenolpyruvate synthase regulatory protein from Bordetella avium (strain 197N).